The chain runs to 454 residues: Lamina-associated polypeptide 2, isoforms beta/gamma (454 aa).

The interval 1–410 (MPEFLEDPSV…KSEKTKKGRS (410 aa)) is nucleoplasmic. The LEM-like domain maps to 5–48 (LEDPSVLTKDKLKSELVANNVTLPAGEQRKDVYVQLYLQHLTAR). 2 disordered regions span residues 47 to 117 (ARNR…ELTN) and 149 to 265 (LREQ…VETS). Positions 49 to 108 (NRPPLPAGTNSKGPPDFSSDEEREPTPVLGSGAAAAGRSRAAVGRKATKKTDKPRQEDKD) are linker. Thr57 is modified (phosphothreonine). A phosphoserine mark is found at Ser59, Ser66, and Ser67. Phosphothreonine is present on Thr74. Residues 78-93 (GSGAAAAGRSRAAVGR) are compositionally biased toward low complexity. Residue Ser79 is modified to Phosphoserine. Omega-N-methylarginine occurs at positions 86 and 88. The span at 97–106 (KKTDKPRQED) shows a compositional bias: basic and acidic residues. Positions 107-117 (KDDLDVTELTN) are enriched in acidic residues. In terms of domain architecture, LEM spans 109–153 (DLDVTELTNEDLLDQLVKYGVNPGPIVGTTRKLYEKKLLKLREQG). The segment at 138–243 (TRKLYEKKLL…TSGSSKGGPL (106 aa)) is NAKAP95-binding N. Thr154 carries the post-translational modification Phosphothreonine. The span at 155-178 (ESRSSTPLPTISSSAENTRQNGSN) shows a compositional bias: polar residues. A phosphoserine mark is found at Ser156 and Ser159. Residues Thr160 and Thr164 each carry the phosphothreonine modification. Phosphoserine is present on residues Ser166, Ser168, Ser177, Ser180, Ser184, and Ser190. Basic and acidic residues predominate over residues 179 to 203 (DSDRYSDNEEDSKIELKLEKREPLK). Lys207 carries the N6-acetyllysine modification. Phosphothreonine is present on Thr211. A compositionally biased stretch (polar residues) spans 220-237 (NQSYSQAGITETEWTSGS). Phosphoserine occurs at positions 222, 224, 250, 254, 265, 292, and 306. Positions 299–371 (TGNFKHASPI…SCRRPIKGAA (73 aa)) are binds lamins B. The tract at residues 300 to 374 (GNFKHASPIL…RPIKGAAGRP (75 aa)) is NAKAP95-binding C. Thr312 bears the Phosphothreonine mark. Ser315 carries the post-translational modification Phosphoserine. Residue Arg320 is modified to Citrulline. A phosphoserine mark is found at Ser362, Ser378, and Ser385. Lys389 carries the post-translational modification N6-acetyllysine. Lys401 participates in a covalent cross-link: Glycyl lysine isopeptide (Lys-Gly) (interchain with G-Cter in SUMO2). At Ser402 the chain carries Phosphoserine. The chain crosses the membrane as a helical; Signal-anchor for type II membrane protein span at residues 411 to 434 (IPVWIKILLFVVVAVFLFLVYQAM). Over 435-454 (ETNQVNPFSNFLHVDPRKSN) the chain is Lumenal.

This sequence belongs to the LEM family. In terms of assembly, interacts with LMNB1, LMNB2, BANF1, AKAP8L, GMCL and chromosomes. Isoform Zeta interacts with BANF1/BAF and may sequester it in the cytoplasm. In terms of processing, mitosis-specific phosphorylation specifically abolishes its binding to lamin B and chromosomes. Citrullinated by PADI4. In terms of tissue distribution, expressed in many tissues. Most abundant in adult thymus and fetal liver.

It is found in the nucleus inner membrane. The protein localises to the cytoplasm. May help direct the assembly of the nuclear lamina and thereby help maintain the structural organization of the nuclear envelope. Possible receptor for attachment of lamin filaments to the inner nuclear membrane. May be involved in the control of initiation of DNA replication through its interaction with NAKAP95. Functionally, thymopoietin (TP) and Thymopentin (TP5) may play a role in T-cell development and function. TP5 is an immunomodulating pentapeptide. This Homo sapiens (Human) protein is Lamina-associated polypeptide 2, isoforms beta/gamma (TMPO).